The sequence spans 274 residues: Dermonecrotic toxin SdSicTox-betaIIB1bvii (274 aa).

The active site involves histidine 5. Glutamate 25 and aspartate 27 together coordinate Mg(2+). The active-site Nucleophile is histidine 41. 2 disulfides stabilise this stretch: cysteine 45-cysteine 51 and cysteine 47-cysteine 190. A Mg(2+)-binding site is contributed by aspartate 85.

This sequence belongs to the arthropod phospholipase D family. Class II subfamily. The cofactor is Mg(2+). In terms of tissue distribution, expressed by the venom gland.

It is found in the secreted. The catalysed reaction is an N-(acyl)-sphingosylphosphocholine = an N-(acyl)-sphingosyl-1,3-cyclic phosphate + choline. It carries out the reaction an N-(acyl)-sphingosylphosphoethanolamine = an N-(acyl)-sphingosyl-1,3-cyclic phosphate + ethanolamine. It catalyses the reaction a 1-acyl-sn-glycero-3-phosphocholine = a 1-acyl-sn-glycero-2,3-cyclic phosphate + choline. The enzyme catalyses a 1-acyl-sn-glycero-3-phosphoethanolamine = a 1-acyl-sn-glycero-2,3-cyclic phosphate + ethanolamine. Its function is as follows. Dermonecrotic toxins cleave the phosphodiester linkage between the phosphate and headgroup of certain phospholipids (sphingolipid and lysolipid substrates), forming an alcohol (often choline) and a cyclic phosphate. This toxin acts on sphingomyelin (SM). It may also act on ceramide phosphoethanolamine (CPE), lysophosphatidylcholine (LPC) and lysophosphatidylethanolamine (LPE), but not on lysophosphatidylserine (LPS), and lysophosphatidylglycerol (LPG). It acts by transphosphatidylation, releasing exclusively cyclic phosphate products as second products. Induces dermonecrosis, hemolysis, increased vascular permeability, edema, inflammatory response, and platelet aggregation. The protein is Dermonecrotic toxin SdSicTox-betaIIB1bvii of Sicarius cf. damarensis (strain GJB-2008) (Six-eyed sand spider).